The following is a 518-amino-acid chain: Zinc finger protein 449 (518 aa).

Residues 30 to 112 (RQRFRQFQYR…SLIEDLQREL (83 aa)) form the SCAN box domain. Over residues 292-304 (NPTLGETPENSNL) the composition is skewed to polar residues. The disordered stretch occupies residues 292-325 (NPTLGETPENSNLEEPLNPKPHKKKSPGEKPHRC). C2H2-type zinc fingers lie at residues 323 to 345 (HRCP…QRIH), 351 to 373 (HKCP…QRLH), 379 to 401 (YECT…QRTH), 407 to 429 (YKCL…LKTH), 435 to 457 (HRCH…QRTH), 463 to 485 (FKCN…LRIH), and 491 to 513 (YKCT…QVTH).

Belongs to the krueppel C2H2-type zinc-finger protein family.

It is found in the nucleus. May be involved in transcriptional regulation. In Homo sapiens (Human), this protein is Zinc finger protein 449 (ZNF449).